A 514-amino-acid chain; its full sequence is Histidine ammonia-lyase (514 aa).

The segment at residues 147 to 149 is a cross-link (5-imidazolinone (Ala-Gly)); sequence ASG. Serine 148 bears the 2,3-didehydroalanine (Ser) mark.

This sequence belongs to the PAL/histidase family. Post-translationally, contains an active site 4-methylidene-imidazol-5-one (MIO), which is formed autocatalytically by cyclization and dehydration of residues Ala-Ser-Gly.

It is found in the cytoplasm. It carries out the reaction L-histidine = trans-urocanate + NH4(+). The protein operates within amino-acid degradation; L-histidine degradation into L-glutamate; N-formimidoyl-L-glutamate from L-histidine: step 1/3. The sequence is that of Histidine ammonia-lyase from Gloeobacter violaceus (strain ATCC 29082 / PCC 7421).